A 69-amino-acid polypeptide reads, in one-letter code: uncharacterized protein (69 aa).

The signal sequence occupies residues methionine 1–serine 18. Positions arginine 17 to valine 69 are disordered. Positions serine 18–serine 61 are enriched in low complexity.

Its subcellular location is the secreted. This is an uncharacterized protein from Dictyostelium discoideum (Social amoeba).